The chain runs to 540 residues: Flavin-dependent halogenase ptaM (540 aa).

The first 21 residues, 1–21, serve as a signal peptide directing secretion; sequence MSVPAQTSVLIVGGGPAGSYA. Positions 14, 17, and 47 each coordinate FAD. N159, N192, N204, and N243 each carry an N-linked (GlcNAc...) asparagine glycan. Residues S330 and G331 each coordinate chloride. N480, N491, and N523 each carry an N-linked (GlcNAc...) asparagine glycan.

Belongs to the flavin-dependent halogenase family.

It participates in secondary metabolite biosynthesis. Flavin-dependent halogenase; part of the gene cluster that mediates the biosynthesis of pestheic acid, a diphenyl ether which is a biosynthetic precursor of the unique chloropupukeananes. The biosynthesis initiates from condensation of acetate and malonate units catalyzed by the non-reducing PKS ptaA. As the ptaA protein is TE/CLC domain-deficient, hydrolysis and Claisen cyclization of the polyketide could be catalyzed by ptaB containing a beta-lactamase domain. The ptaB protein might hydrolyze the thioester bond between the ACP of ptaA and the intermediate to release atrochrysone carboxylic acid, which is spontaneously dehydrated to form endocrocin anthrone. Endocrocin anthrone is then converted to endocrocin, catalyzed by the anthrone oxygenase ptaC. Spontaneous decarboxylation of endocrocin occurs to generate emodin. An O-methyltransferase (ptaH or ptaI) could methylate emodin to form physcion. PtaJ could then catalyze the oxidative cleavage of physcion, and rotation of the intermediate could then afford desmethylisosulochrin. PtaF, a putative NADH-dependent oxidoreductase, might also participate in the oxidative cleavage step. Desmethylisosulochrin is then transformed by another O-methyltransferase (ptaH or ptaI) to form isosulochrin. Chlorination of isosulochrin by ptaM in the cyclohexadienone B ring then produces chloroisosulochrin. PtaE is responsible for the oxidative coupling reactions of both benzophenones isosulochrin and chloroisosulochrin to RES-1214-1 and pestheic acid respectively, regardless of chlorination. The chain is Flavin-dependent halogenase ptaM from Pestalotiopsis fici (strain W106-1 / CGMCC3.15140).